The following is a 382-amino-acid chain: Putative glutamate--cysteine ligase 2-1 (382 aa).

The protein belongs to the glutamate--cysteine ligase type 2 family. YbdK subfamily.

The enzyme catalyses L-cysteine + L-glutamate + ATP = gamma-L-glutamyl-L-cysteine + ADP + phosphate + H(+). Its function is as follows. ATP-dependent carboxylate-amine ligase which exhibits weak glutamate--cysteine ligase activity. The protein is Putative glutamate--cysteine ligase 2-1 of Frankia alni (strain DSM 45986 / CECT 9034 / ACN14a).